Consider the following 452-residue polypeptide: NAD kinase 2, mitochondrial (452 aa).

A mitochondrion-targeting transit peptide spans 1-50 (MTCYRGFLLGSCRRVAGGRAALRGSGSGADGRRHLGHGQPRELAGGGSPA). Positions 23 to 52 (RGSGSGADGRRHLGHGQPRELAGGGSPADG) are disordered. Lysine 64 bears the N6-acetyllysine; alternate mark. N6-succinyllysine; alternate is present on lysine 64. Phosphoserine is present on serine 176. Position 312 is an N6-succinyllysine (lysine 312). Residue lysine 327 is modified to N6-acetyllysine; alternate. Lysine 327 carries the N6-succinyllysine; alternate modification. The residue at position 377 (serine 377) is a Phosphoserine. Lysine 407 bears the N6-acetyllysine mark.

It belongs to the NAD kinase family. Homodimer.

It is found in the mitochondrion. It carries out the reaction NAD(+) + ATP = ADP + NADP(+) + H(+). Its activity is regulated as follows. Inhibited by NADH, NADPH and NADP(+). Functionally, mitochondrial NAD(+) kinase that phosphorylates NAD(+) to yield NADP(+). Can use both ATP or inorganic polyphosphate as the phosphoryl donor. This is NAD kinase 2, mitochondrial (Nadk2) from Mus musculus (Mouse).